Here is a 397-residue protein sequence, read N- to C-terminus: Proteinase-activated receptor 2 (397 aa).

A signal peptide spans 1–25; that stretch reads MRSLSLAWLLGGITLLAASASCNRT. Asparagine 23 carries N-linked (GlcNAc...) asparagine glycosylation. Residues 26-36 constitute a propeptide, removed for receptor activation; that stretch reads VNAPGPNSKGR. The Extracellular portion of the chain corresponds to 37-71; sequence SLIGRLDTPPPITGKGAPVEPGFSVDEFSASVLTG. A helical membrane pass occupies residues 72-101; that stretch reads KLTTVFLPVIYIIVFVIGLPSNGMALWVFF. The Cytoplasmic segment spans residues 102 to 108; the sequence is FRTKKKH. A helical transmembrane segment spans residues 109-137; it reads PAVIYMANLALADLLSVIWFPLKISYHLH. Topologically, residues 138–149 are extracellular; the sequence is GNDWTYGDALCK. A disulfide bond links cysteine 148 and cysteine 226. Residues 150–177 form a helical membrane-spanning segment; it reads VLIGFFYGNMYCSILFMTCLSVQRYWVI. At 178-183 the chain is on the cytoplasmic side; the sequence is VNPMGH. The chain crosses the membrane as a helical span at residues 184–211; it reads SRKRANIAVGVSLAIWLLIFLVTIPLYV. The Extracellular portion of the chain corresponds to 212-235; sequence MRQTIYIPALNITTCHDVLPEEVL. Residue asparagine 222 is glycosylated (N-linked (GlcNAc...) asparagine). The chain crosses the membrane as a helical span at residues 236–269; the sequence is VGDMFSYFLSLAIGVFLFPALLTASAYVLMIKTL. Residues 270-277 are Cytoplasmic-facing; the sequence is RSSAMDEH. Residues 278-317 traverse the membrane as a helical segment; sequence SEKKRRRAIRLIITVLSMYFICFAPSNVLLVVHYFLIKSQ. The Extracellular portion of the chain corresponds to 318–323; sequence RQSHVY. Residues 324–347 form a helical membrane-spanning segment; it reads ALYLVALCLSTLNSCIDPFVYYFV. Topologically, residues 348–397 are cytoplasmic; it reads SKDFRDQARNALLCRSVRTVKRMQISLTSNKFSRKSSSYSSSSTSVKTSY. Cysteine 361 carries S-palmitoyl cysteine lipidation.

The protein belongs to the G-protein coupled receptor 1 family. As to quaternary structure, interacts with TLR4, COPS5 and TMED2. Interacts with GNAQ, GNA11, GNA12, GNA13 and GNA14. A proteolytic cleavage generates a new N-terminus that functions as a tethered ligand. Activating serine proteases include trypsin, mast cell tryptase, coagulation factors VII and Xa, myeloblastin/PRTN3 and membrane-type serine protease 1/ST14. Proposed subsequent cleavage by serine proteases is leading to receptor deactivation and include neutrophil elastase and cathepsin G. At least in part, implicated proteases are also shown to activate the receptor; the glycosylation status of the receptor is thought to contribute to the difference. Post-translationally, N-glycosylated and sialylated. In terms of processing, multiple phosphorylated on serine and threonine residues in the cytoplasmic region upon receptor activation; required for receptor desensitization and recruitment of beta-arrestin. Monoubiquitinated by Cbl at the plasma membrane and in early endosomes; not required for receptor endocytosis but for translocation to late endosomes or lysosomes. Deubiquitination involves Stambp and Usp8; required for lysosomal trafficking and receptor degradation.

It is found in the cell membrane. In terms of biological role, receptor for trypsin and trypsin-like enzymes coupled to G proteins. Its function is mediated through the activation of several signaling pathways including phospholipase C (PLC), intracellular calcium, mitogen-activated protein kinase (MAPK), I-kappaB kinase/NF-kappaB and Rho. Can also be transactivated by cleaved F2R/PAR1. Involved in modulation of inflammatory responses and regulation of innate and adaptive immunity, and acts as a sensor for proteolytic enzymes generated during infection. Generally is promoting inflammation. Can signal synergistically with TLR4 and probably TLR2 in inflammatory responses and modulates Tlr3 signaling. Has a protective role in establishing the endothelial barrier; the activity involves coagulation factor X. Regulates endothelial cell barrier integrity during neutrophil extravasation, probably following proteolytic cleavage by PRTN3. Proposed to have a bronchoprotective role in airway epithelium, but also shown to compromise the airway epithelial barrier by interrupting E-cadherin adhesion. Involved in the regulation of vascular tone; activation results in hypotension presumably mediated by vasodilation. Associates with a subset of G proteins alpha subunits such as GNAQ, GNA11, GNA14, GNA12 and GNA13, but probably not with G(o)-alpha, G(i) subunit alpha-1 and G(i) subunit alpha-2. Believed to be a class B receptor which internalizes as a complex with arrestin and traffic with it to endosomal vesicles, presumably as desensitized receptor, for extended periods of time. Mediates inhibition of TNF-alpha stimulated JNK phosphorylation via coupling to G GNAQ and GNA11; the function involves dissociation of RIPK1 and Tradd from TNFR1. Mediates phosphorylation of nuclear factor NF-kappa-B RELA subunit at 'Ser-536'; the function involves Ikbkb and is predominantly independent of G proteins. Involved in cellular migration. Involved in cytoskeletal rearrangement and chemotaxis through beta-arrestin-promoted scaffolds; the function is independent of GNAQ and GNA11 and involves promotion of cofilin dephosphorylation and actin filament severing. Induces redistribution of COPS5 from the plasma membrane to the cytosol and activation of the JNK cascade is mediated by Cops5. Involved in the recruitment of leukocytes to the sites of inflammation and is the major PAR receptor capable of modulating eosinophil function such as pro-inflammatory cytokine secretion, superoxide production and degranulation. During inflammation promotes dendritic cell maturation, trafficking to the lymph nodes and subsequent T-cell activation. Involved in antimicrobial response of innate immune cells; activation enhances phagocytosis of Gram-positive and killing of Gram-negative bacteria. Acts synergistically with interferon-gamma in enhancing antiviral responses. Probably mediates activation of pro-inflammatory and pro-fibrotic responses in fibroblasts, triggered by coagulation factor Xa (F10). Probably mediates activation of barrier protective signaling responses in endothelial cells, triggered by coagulation factor Xa (F10). The sequence is that of Proteinase-activated receptor 2 (F2rl1) from Rattus norvegicus (Rat).